A 207-amino-acid polypeptide reads, in one-letter code: Octanoyltransferase (207 aa).

One can recognise a BPL/LPL catalytic domain in the interval Ala-27–Ala-203. Residues Arg-66–His-73, Ser-133–Gly-135, and Gly-146–Ala-148 each bind substrate. Cys-164 acts as the Acyl-thioester intermediate in catalysis.

This sequence belongs to the LipB family.

The protein localises to the cytoplasm. The enzyme catalyses octanoyl-[ACP] + L-lysyl-[protein] = N(6)-octanoyl-L-lysyl-[protein] + holo-[ACP] + H(+). Its pathway is protein modification; protein lipoylation via endogenous pathway; protein N(6)-(lipoyl)lysine from octanoyl-[acyl-carrier-protein]: step 1/2. Catalyzes the transfer of endogenously produced octanoic acid from octanoyl-acyl-carrier-protein onto the lipoyl domains of lipoate-dependent enzymes. Lipoyl-ACP can also act as a substrate although octanoyl-ACP is likely to be the physiological substrate. The sequence is that of Octanoyltransferase from Neisseria meningitidis serogroup C / serotype 2a (strain ATCC 700532 / DSM 15464 / FAM18).